The chain runs to 2216 residues: RNA-directed RNA polymerase L (2216 aa).

The segment at K26–R289 is endonuclease. Positions 51, 88, and 101 each coordinate Mn(2+). The active site involves K114. The region spanning L1167–V1364 is the RdRp catalytic domain. D1323 provides a ligand contact to Mg(2+).

It belongs to the Bunyavirales RNA polymerase family. Homomultimer; the oligomeric structure is essential for the polymerase activity. Interacts with nucleoprotein N. Interacts with protein Z; this interaction inhibits viral transcription and replication, Z partially blocks the product exit tunnel for the releasing nascent RNA product. Mn(2+) is required as a cofactor. Requires Mg(2+) as cofactor.

Its subcellular location is the virion. The protein localises to the host cytoplasm. It catalyses the reaction RNA(n) + a ribonucleoside 5'-triphosphate = RNA(n+1) + diphosphate. Functionally, RNA-dependent RNA polymerase, which is responsible for the replication and transcription of the viral RNA genome using antigenomic RNA as an intermediate. During transcription, synthesizes subgenomic RNAs and assures their capping by a cap-snatching mechanism, which involves the endonuclease activity cleaving the host capped pre-mRNAs. These short capped RNAs are then used as primers for viral transcription. The 3'-end of subgenomic mRNAs molecules are heterogeneous and not polyadenylated. The replicase function is to direct synthesis of antigenomic and genomic RNA which are encapsidated and non capped. As a consequence of the use of the same enzyme for both transcription and replication, these mechanisms need to be well coordinated. These processes may be regulated by proteins N and Z in a dose-dependent manner. Z protein inhibits the viral polymerase L und thus the viral transcription and RNA synthesis. The protein is RNA-directed RNA polymerase L of Bear Canyon mammarenavirus (isolate Mouse/United States/AV A0070039/2000) (BCNV).